The following is a 204-amino-acid chain: 34 kDa membrane antigen (204 aa).

Positions 1-19 are cleaved as a signal peptide; sequence MKRVSLLGSAAIFALVFSA. C20 carries N-palmitoyl cysteine lipidation. C20 carries S-diacylglycerol cysteine lipidation.

It belongs to the UPF0423 family.

The protein localises to the cell membrane. Its function is as follows. This antigen is a pathogen-specific membrane immunogen. The polypeptide is 34 kDa membrane antigen (tpd) (Treponema pallidum (strain Nichols)).